The primary structure comprises 341 residues: Methionine import ATP-binding protein MetN 3 (341 aa).

The ABC transporter domain maps to 2-241; the sequence is IEFQNVTKTF…PSHETTKRFI (240 aa). An ATP-binding site is contributed by 38-45; sequence GFSGAGKS.

This sequence belongs to the ABC transporter superfamily. Methionine importer (TC 3.A.1.24) family. The complex is composed of two ATP-binding proteins (MetN), two transmembrane proteins (MetI) and a solute-binding protein (MetQ).

The protein resides in the cell membrane. The enzyme catalyses L-methionine(out) + ATP + H2O = L-methionine(in) + ADP + phosphate + H(+). The catalysed reaction is D-methionine(out) + ATP + H2O = D-methionine(in) + ADP + phosphate + H(+). Part of the ABC transporter complex MetNIQ involved in methionine import. Responsible for energy coupling to the transport system. The polypeptide is Methionine import ATP-binding protein MetN 3 (Oceanobacillus iheyensis (strain DSM 14371 / CIP 107618 / JCM 11309 / KCTC 3954 / HTE831)).